A 163-amino-acid polypeptide reads, in one-letter code: T-cell surface glycoprotein CD3 zeta chain (163 aa).

The N-terminal stretch at 1–21 is a signal peptide; the sequence is MKWKALFTAAILQAQLPITEA. Residues 22-30 lie on the Extracellular side of the membrane; it reads QSFGLLDPK. The chain crosses the membrane as a helical span at residues 31-51; that stretch reads LCYLLDGILFIYGVILTALFL. Residues 52–163 are Cytoplasmic-facing; that stretch reads RVKFSRSADA…ALHMQALPPR (112 aa). Ser-58 carries the post-translational modification Phosphoserine. ITAM domains are found at residues 61 to 89, 99 to 127, and 130 to 158; these read APAYQQGQNQLYNELNLGRREEYDVLDKR, KPRRKNPQEGLYNELQKDKMAEAYSEIGM, and ERRRGKGHDGLYQGLSTATKDTYDALHMQ. A phosphotyrosine mark is found at Tyr-64, Tyr-72, Tyr-83, Tyr-110, Tyr-122, Tyr-141, and Tyr-152. A compositionally biased stretch (basic and acidic residues) spans 83–98; it reads YDVLDKRRGRDPEMGG. A disordered region spans residues 83–111; it reads YDVLDKRRGRDPEMGGKPRRKNPQEGLYN.

This sequence belongs to the CD3Z/FCER1G family. As to quaternary structure, the TCR-CD3 complex is composed of a CD3D/CD3E and a CD3G/CD3E heterodimers that preferentially associate with TCRalpha and TCRbeta, respectively, to form TCRalpha/CD3E/CD3G and TCRbeta/CD3G/CD3E trimers. In turn, the hexamer interacts with CD3Z homodimer to form the TCR-CD3 complex. Alternatively, TCRalpha and TCRbeta can be replaced by TCRgamma and TCRdelta. Interacts with SLA. Interacts with TRAT1. Interacts with DOCK2. Interacts with SLA2. Interacts with SHB. Interacts with ZAP70. Interacts (tyrosine phosphorylated) with SHC1 (via SH2 domain). Interacts with PTPRC. Interacts with CRK; this interaction regulates CD3Z phosphorylation. Interacts (on T cell side) with CD81, ICAM1 and CD9 at immunological synapses between antigen-presenting cells and T cells. Interacts with CD160. Interacts with LY6E. Interacts with LY6E. The signaling subunit of immunoglobulin gamma (IgG) Fc receptor complex. As a homodimer or a heterodimer with FCER1G, associates with the ligand binding subunit FCGR3A (via transmembrane domain); this interaction is a prerequisite for Fc receptor complex expression on the cell surface. Interacts with CD5. In terms of processing, phosphorylated on Tyr residues after T-cell receptor triggering by LCK in association with CD4/CD8.

The protein localises to the cell membrane. Its function is as follows. Part of the TCR-CD3 complex present on T-lymphocyte cell surface that plays an essential role in adaptive immune response. When antigen presenting cells (APCs) activate T-cell receptor (TCR), TCR-mediated signals are transmitted across the cell membrane by the CD3 chains CD3D, CD3E, CD3G and CD3Z. All CD3 chains contain immunoreceptor tyrosine-based activation motifs (ITAMs) in their cytoplasmic domain. Upon TCR engagement, these motifs become phosphorylated by Src family protein tyrosine kinases LCK and FYN, resulting in the activation of downstream signaling pathways. CD3Z ITAMs phosphorylation creates multiple docking sites for the protein kinase ZAP70 leading to ZAP70 phosphorylation and its conversion into a catalytically active enzyme. Plays an important role in intrathymic T-cell differentiation. Additionally, participates in the activity-dependent synapse formation of retinal ganglion cells (RGCs) in both the retina and dorsal lateral geniculate nucleus (dLGN). The protein is T-cell surface glycoprotein CD3 zeta chain (CD247) of Sus scrofa (Pig).